The chain runs to 359 residues: Ribosomal RNA small subunit methyltransferase H (359 aa).

S-adenosyl-L-methionine-binding positions include 39 to 41, D58, F87, D108, and Q115; that span reads AGH. The disordered stretch occupies residues 339-359; sequence IQGSASPGRAKNTARIRTRRG. Over residues 350–359 the composition is skewed to basic residues; the sequence is NTARIRTRRG.

The protein belongs to the methyltransferase superfamily. RsmH family.

Its subcellular location is the cytoplasm. It carries out the reaction cytidine(1402) in 16S rRNA + S-adenosyl-L-methionine = N(4)-methylcytidine(1402) in 16S rRNA + S-adenosyl-L-homocysteine + H(+). Specifically methylates the N4 position of cytidine in position 1402 (C1402) of 16S rRNA. This is Ribosomal RNA small subunit methyltransferase H from Bifidobacterium longum (strain DJO10A).